A 92-amino-acid polypeptide reads, in one-letter code: Small ribosomal subunit protein bS20 (92 aa).

The tract at residues 1-23 (MANSPSAKKRAIQAEKRRSHNAS) is disordered.

The protein belongs to the bacterial ribosomal protein bS20 family.

Functionally, binds directly to 16S ribosomal RNA. The polypeptide is Small ribosomal subunit protein bS20 (Stutzerimonas stutzeri (strain A1501) (Pseudomonas stutzeri)).